The following is a 556-amino-acid chain: Formate--tetrahydrofolate ligase (556 aa).

65–72 (TPAGEGKS) is an ATP binding site.

This sequence belongs to the formate--tetrahydrofolate ligase family.

The catalysed reaction is (6S)-5,6,7,8-tetrahydrofolate + formate + ATP = (6R)-10-formyltetrahydrofolate + ADP + phosphate. Its pathway is one-carbon metabolism; tetrahydrofolate interconversion. In Streptococcus pneumoniae (strain Taiwan19F-14), this protein is Formate--tetrahydrofolate ligase.